Consider the following 231-residue polypeptide: Small ribosomal subunit protein uS3c (231 aa).

A KH type-2 domain is found at 39–123; it reads LRNFIKKKYI…HLRLSVKPLR (85 aa).

Belongs to the universal ribosomal protein uS3 family. Part of the 30S ribosomal subunit.

The protein localises to the plastid. It localises to the chloroplast. This Chlorella vulgaris (Green alga) protein is Small ribosomal subunit protein uS3c (rps3).